Consider the following 532-residue polypeptide: CTP synthase (532 aa).

Positions 1–267 are amidoligase domain; sequence MAKFIFVTGG…QDIIIEQLQL (267 aa). Ser-13 lines the CTP pocket. Position 13 (Ser-13) interacts with UTP. 14 to 19 contributes to the ATP binding site; it reads GLGKGI. Tyr-54 serves as a coordination point for L-glutamine. Residue Asp-71 participates in ATP binding. 2 residues coordinate Mg(2+): Asp-71 and Glu-141. Residues 148–150, 188–193, and Lys-224 contribute to the CTP site; these read DIE and KTKPIQ. Residues 188–193 and Lys-224 contribute to the UTP site; that span reads KTKPIQ. A Glutamine amidotransferase type-1 domain is found at 292–532; the sequence is EISFVGKYIE…FIKAIVENNK (241 aa). An L-glutamine-binding site is contributed by Gly-354. Residue Cys-381 is the Nucleophile; for glutamine hydrolysis of the active site. L-glutamine is bound by residues 382-385, Glu-405, and Arg-461; that span reads LGMQ. Residues His-506 and Glu-508 contribute to the active site.

Belongs to the CTP synthase family. In terms of assembly, homotetramer.

It catalyses the reaction UTP + L-glutamine + ATP + H2O = CTP + L-glutamate + ADP + phosphate + 2 H(+). The catalysed reaction is L-glutamine + H2O = L-glutamate + NH4(+). The enzyme catalyses UTP + NH4(+) + ATP = CTP + ADP + phosphate + 2 H(+). The protein operates within pyrimidine metabolism; CTP biosynthesis via de novo pathway; CTP from UDP: step 2/2. Its activity is regulated as follows. Allosterically activated by GTP, when glutamine is the substrate; GTP has no effect on the reaction when ammonia is the substrate. The allosteric effector GTP functions by stabilizing the protein conformation that binds the tetrahedral intermediate(s) formed during glutamine hydrolysis. Inhibited by the product CTP, via allosteric rather than competitive inhibition. Its function is as follows. Catalyzes the ATP-dependent amination of UTP to CTP with either L-glutamine or ammonia as the source of nitrogen. Regulates intracellular CTP levels through interactions with the four ribonucleotide triphosphates. The chain is CTP synthase from Mycoplasma mycoides subsp. mycoides SC (strain CCUG 32753 / NCTC 10114 / PG1).